Here is a 398-residue protein sequence, read N- to C-terminus: Growth-regulating factor 3 (398 aa).

A compositionally biased stretch (low complexity) spans 1 to 17 (MDLQLKQWRSQQQQQHQ). The tract at residues 1 to 32 (MDLQLKQWRSQQQQQHQTESEEQPSAAKIPKH) is disordered. In terms of domain architecture, QLQ spans 76–111 (FFSWAQWQELELQALIYRYMLAGAAVPQELLLPIKK). Residues 144 to 188 (DPEPGRCRRTDGKKWRCSRDVFAGHKYCERHMHRGRNRSRKPVET) form the WRC domain. 2 short sequence motifs (bipartite nuclear localization signal) span residues 149-159 (RCRRTDGKKWR) and 177-184 (RGRNRSRK). Composition is skewed to polar residues over residues 299–350 (SLQE…RDQQ) and 383–398 (PTSV…QAFH). Residues 299-398 (SLQEADNSSS…QLGVSTQAFH (100 aa)) are disordered.

It belongs to the GRF family. In terms of tissue distribution, strongly expressed in actively growing and developing tissues, such as roots, upper stems, and shoot tips containing the shoot apical meristem (SAM) and flower buds. Also expressed in mature flowers, but weakly expressed in mature stems and leaves.

It localises to the nucleus. Transcription activator that plays a role in the regulation of cell expansion in leaf and cotyledons tissues. Component of a network formed by miR396, the GRFs and their interacting factors (GIFs) acting in the regulation of meristem function, at least partially through the control of cell proliferation. microRNA396-GRF1/GRF3 regulatory module acts as a developmental regulator in the reprogramming of root cells during cyst nematode infection, leading to the formation of the syncytium. The protein is Growth-regulating factor 3 (GRF3) of Arabidopsis thaliana (Mouse-ear cress).